Consider the following 113-residue polypeptide: U11-theraphotoxin-Hhn1a (113 aa).

Positions 1–21 are cleaved as a signal peptide; that stretch reads MNTVRVTFLLVFVLAVSLGQA. The propeptide occupies 22 to 74; it reads DKDENRMEMQEKTEQGNSYLDFAENLLLQKLEELEAKLLEEDSEESRNSRQKR. Basic and acidic residues predominate over residues 60–69; it reads LEEDSEESRN. The disordered stretch occupies residues 60–83; the sequence is LEEDSEESRNSRQKRCIGEGVPCD. 3 disulfides stabilise this stretch: C75/C90, C82/C95, and C89/C110.

Belongs to the neurotoxin 14 (magi-1) family. 01 (HNTX-16) subfamily. In terms of tissue distribution, expressed by the venom gland.

Its subcellular location is the secreted. In terms of biological role, probable ion channel inhibitor. This Cyriopagopus hainanus (Chinese bird spider) protein is U11-theraphotoxin-Hhn1a.